Here is a 354-residue protein sequence, read N- to C-terminus: UDP-N-acetylglucosamine--N-acetylmuramyl-(pentapeptide) pyrophosphoryl-undecaprenol N-acetylglucosamine transferase (354 aa).

Residues 11-13 (TAG), R164, S194, and Q289 each bind UDP-N-acetyl-alpha-D-glucosamine.

It belongs to the glycosyltransferase 28 family. MurG subfamily.

Its subcellular location is the cell membrane. It carries out the reaction di-trans,octa-cis-undecaprenyl diphospho-N-acetyl-alpha-D-muramoyl-L-alanyl-D-glutamyl-meso-2,6-diaminopimeloyl-D-alanyl-D-alanine + UDP-N-acetyl-alpha-D-glucosamine = di-trans,octa-cis-undecaprenyl diphospho-[N-acetyl-alpha-D-glucosaminyl-(1-&gt;4)]-N-acetyl-alpha-D-muramoyl-L-alanyl-D-glutamyl-meso-2,6-diaminopimeloyl-D-alanyl-D-alanine + UDP + H(+). It participates in cell wall biogenesis; peptidoglycan biosynthesis. Its function is as follows. Cell wall formation. Catalyzes the transfer of a GlcNAc subunit on undecaprenyl-pyrophosphoryl-MurNAc-pentapeptide (lipid intermediate I) to form undecaprenyl-pyrophosphoryl-MurNAc-(pentapeptide)GlcNAc (lipid intermediate II). This chain is UDP-N-acetylglucosamine--N-acetylmuramyl-(pentapeptide) pyrophosphoryl-undecaprenol N-acetylglucosamine transferase, found in Clostridium botulinum (strain Loch Maree / Type A3).